A 129-amino-acid chain; its full sequence is MIKPPLKSRKKIKKNIIEGVAHIHASFNNTIVTISDRQGNALSWATSGGVGFKGSRKSTPFAAQVAAEHAGRAALEYGVKNLEIRVKGPGPGRDSAVRALNATGFKITSITDVTPVPHNGCRPPKKRRI.

The protein belongs to the universal ribosomal protein uS11 family. Part of the 30S ribosomal subunit. Interacts with proteins S7 and S18. Binds to IF-3.

Located on the platform of the 30S subunit, it bridges several disparate RNA helices of the 16S rRNA. Forms part of the Shine-Dalgarno cleft in the 70S ribosome. This Nitrosomonas eutropha (strain DSM 101675 / C91 / Nm57) protein is Small ribosomal subunit protein uS11.